Here is a 395-residue protein sequence, read N- to C-terminus: Succinate--CoA ligase [ADP-forming] subunit beta (395 aa).

The ATP-grasp domain occupies 9–240; it reads RDVFEKHGVP…AASADPLEAK (232 aa). ATP-binding positions include lysine 49, 56–58, alanine 98, and glutamate 103; that span reads GRG. Positions 195 and 209 each coordinate Mg(2+). Substrate contacts are provided by residues asparagine 260 and 322 to 324; that span reads GIT.

This sequence belongs to the succinate/malate CoA ligase beta subunit family. As to quaternary structure, heterotetramer of two alpha and two beta subunits. Mg(2+) is required as a cofactor.

The catalysed reaction is succinate + ATP + CoA = succinyl-CoA + ADP + phosphate. It carries out the reaction GTP + succinate + CoA = succinyl-CoA + GDP + phosphate. The protein operates within carbohydrate metabolism; tricarboxylic acid cycle; succinate from succinyl-CoA (ligase route): step 1/1. In terms of biological role, succinyl-CoA synthetase functions in the citric acid cycle (TCA), coupling the hydrolysis of succinyl-CoA to the synthesis of either ATP or GTP and thus represents the only step of substrate-level phosphorylation in the TCA. The beta subunit provides nucleotide specificity of the enzyme and binds the substrate succinate, while the binding sites for coenzyme A and phosphate are found in the alpha subunit. The sequence is that of Succinate--CoA ligase [ADP-forming] subunit beta from Beutenbergia cavernae (strain ATCC BAA-8 / DSM 12333 / CCUG 43141 / JCM 11478 / NBRC 16432 / NCIMB 13614 / HKI 0122).